We begin with the raw amino-acid sequence, 283 residues long: uncharacterized protein (283 aa).

This is an uncharacterized protein from Streptomyces coelicolor (strain ATCC BAA-471 / A3(2) / M145).